Here is a 223-residue protein sequence, read N- to C-terminus: Deoxyribose-phosphate aldolase (223 aa).

Asp89 acts as the Proton donor/acceptor in catalysis. The Schiff-base intermediate with acetaldehyde role is filled by Lys152. The active-site Proton donor/acceptor is the Lys181.

This sequence belongs to the DeoC/FbaB aldolase family. DeoC type 1 subfamily.

It is found in the cytoplasm. It catalyses the reaction 2-deoxy-D-ribose 5-phosphate = D-glyceraldehyde 3-phosphate + acetaldehyde. It participates in carbohydrate degradation; 2-deoxy-D-ribose 1-phosphate degradation; D-glyceraldehyde 3-phosphate and acetaldehyde from 2-deoxy-alpha-D-ribose 1-phosphate: step 2/2. In terms of biological role, catalyzes a reversible aldol reaction between acetaldehyde and D-glyceraldehyde 3-phosphate to generate 2-deoxy-D-ribose 5-phosphate. The chain is Deoxyribose-phosphate aldolase from Bacillus mycoides (strain KBAB4) (Bacillus weihenstephanensis).